We begin with the raw amino-acid sequence, 184 residues long: Small ribosomal subunit protein uS7 (184 aa).

The protein belongs to the universal ribosomal protein uS7 family. As to quaternary structure, part of the 30S ribosomal subunit.

One of the primary rRNA binding proteins, it binds directly to 16S rRNA where it nucleates assembly of the head domain of the 30S subunit. Is located at the subunit interface close to the decoding center. This Thermoplasma volcanium (strain ATCC 51530 / DSM 4299 / JCM 9571 / NBRC 15438 / GSS1) protein is Small ribosomal subunit protein uS7.